The chain runs to 110 residues: Co-chaperonin GroES (110 aa).

Belongs to the GroES chaperonin family. As to quaternary structure, heptamer of 7 subunits arranged in a ring. Interacts with the chaperonin GroEL.

It is found in the cytoplasm. Its function is as follows. Together with the chaperonin GroEL, plays an essential role in assisting protein folding. The GroEL-GroES system forms a nano-cage that allows encapsulation of the non-native substrate proteins and provides a physical environment optimized to promote and accelerate protein folding. GroES binds to the apical surface of the GroEL ring, thereby capping the opening of the GroEL channel. The polypeptide is Co-chaperonin GroES (Mycoplasma genitalium (strain ATCC 33530 / DSM 19775 / NCTC 10195 / G37) (Mycoplasmoides genitalium)).